A 141-amino-acid chain; its full sequence is ATP synthase epsilon chain (141 aa).

The protein belongs to the ATPase epsilon chain family. In terms of assembly, F-type ATPases have 2 components, CF(1) - the catalytic core - and CF(0) - the membrane proton channel. CF(1) has five subunits: alpha(3), beta(3), gamma(1), delta(1), epsilon(1). CF(0) has three main subunits: a, b and c.

The protein resides in the cell inner membrane. Produces ATP from ADP in the presence of a proton gradient across the membrane. In Bordetella avium (strain 197N), this protein is ATP synthase epsilon chain.